Here is a 1791-residue protein sequence, read N- to C-terminus: Sodium channel protein type 11 subunit alpha (1791 aa).

At 1–126 (MDDRCYPVIF…SIRSLAIRVS (126 aa)) the chain is on the cytoplasmic side. Residues 115–408 (FNSIRSLAIR…VTMAYEEQNK (294 aa)) form an I repeat. The helical transmembrane segment at 127–148 (VHSLFSMFIIGTVIINCVFMAT) threads the bilayer. Residues 149 to 156 (GPAKNSNS) are Extracellular-facing. The helical transmembrane segment at 157-180 (NNTDIAECVFTGIYIFEALIKILA) threads the bilayer. The Cytoplasmic segment spans residues 181-192 (RGFILDEFSFLR). Residues 193–212 (DPWNWLDSIVIGIAIVSYIP) traverse the membrane as a helical segment. Topologically, residues 213–219 (GITIKLL) are extracellular. A helical; Voltage-sensor membrane pass occupies residues 220-239 (PLRTFRVFRALKAISVVSRL). Topologically, residues 240–255 (KVIVGALLRSVKKLVN) are cytoplasmic. Residues 256-269 (VIILTFFCLSIFAL) form a helical membrane-spanning segment. At 270–344 (VGQQLFMGSL…PDYNYTNFDN (75 aa)) the chain is on the extracellular side. A disulfide bond links C283 and C322. N-linked (GlcNAc...) asparagine glycosylation is found at N290 and N338. Residues 345–369 (FGWSFLAMFRLMTQDSWEKLYQQTL) constitute an intramembrane region (pore-forming). The Extracellular segment spans residues 370–376 (RTTGLYS). The helical transmembrane segment at 377–402 (VFFFIVVIFLGSFYLINLTLAVVTMA) threads the bilayer. Topologically, residues 403-572 (YEEQNKNVAA…WLCVKKVLRT (170 aa)) are cytoplasmic. The II repeat unit spans residues 559–833 (CCPQWLCVKK…EGEARKTKVQ (275 aa)). A helical membrane pass occupies residues 573-596 (VMTDPFTELAITICIIINTVFLAM). Residues 597–607 (EHHKMEASFEK) are Extracellular-facing. A helical transmembrane segment spans residues 608–631 (MLNIGNLVFTSIFIAEMCLKIIAL). At 632–639 (DPYHYFRR) the chain is on the cytoplasmic side. The chain crosses the membrane as a helical span at residues 640–659 (GWNIFDSIVALLSFADVMNC). Topologically, residues 660–667 (VLQKRSWP) are extracellular. Residues 668-687 (FLRSFRVLRVFKLAKSWPTL) form a helical; Voltage-sensor membrane-spanning segment. Topologically, residues 688 to 702 (NTLIKIIGNSVGALG) are cytoplasmic. Residues 703–725 (SLTVVLVIVIFIFSVVGMQLFGR) form a helical membrane-spanning segment. Topologically, residues 726-753 (SFNSQKSPKLCNPTGPTVSCLRHWHMGD) are extracellular. The segment at residues 754–774 (FWHSFLVVFRILCGEWIENMW) is an intramembrane region (pore-forming). The Extracellular segment spans residues 775-785 (ECMQEANASSS). C776 and C787 are oxidised to a cystine. A glycan (N-linked (GlcNAc...) asparagine) is linked at N781. A helical membrane pass occupies residues 786–811 (LCVIVFILITVIGKLVVLNLFIALLL). At 812-1051 (NSFSNEERNG…WWNLRKTCYQ (240 aa)) the chain is on the cytoplasmic side. Residues 1044-1339 (NLRKTCYQIV…KKYYNAMKKL (296 aa)) form an III repeat. A helical membrane pass occupies residues 1052 to 1074 (IVKHSWFESFIIFVILLSSGALI). The Extracellular segment spans residues 1075-1088 (FEDVHLENQPKIQE). A helical membrane pass occupies residues 1089–1114 (LLNCTDIIFTHIFILEMVLKWVAFGF). The Cytoplasmic portion of the chain corresponds to 1115 to 1120 (GKYFTS). Residues 1121-1138 (AWCCLDFIIVIVSVTTLI) traverse the membrane as a helical segment. Residue N1139 is a topological domain, extracellular. The helical; Voltage-sensor transmembrane segment at 1140–1161 (LMELKSFRTLRALRPLRALSQF) threads the bilayer. Topologically, residues 1162-1180 (EGMKVVVNALIGAIPAILN) are cytoplasmic. Residues 1181–1202 (VLLVCLIFWLVFCILGVYFFSG) form a helical membrane-spanning segment. Residues 1203–1243 (KFGKCINGTDSVINYTIITNKSQCESGNFSWINQKVNFDNV) lie on the Extracellular side of the membrane. 4 N-linked (GlcNAc...) asparagine glycosylation sites follow: N1209, N1216, N1222, and N1230. The segment at residues 1244 to 1265 (GNAYLALLQVATFKGWMDIIYA) is an intramembrane region (pore-forming). The Extracellular segment spans residues 1266-1281 (AVDSTEKEQQPEFESN). A helical membrane pass occupies residues 1282–1308 (SLGYIYFVVFIIFGSFFTLNLFIGVII). Residues 1309-1361 (DNFNQQQKKLGGQDIFMTEEQKKYYNAMKKLGSKKPQKPIPRPLNKCQGLVFD) are Cytoplasmic-facing. One copy of the IV repeat lies at 1348–1639 (IPRPLNKCQG…WEKFDPEATQ (292 aa)). Residues 1362–1385 (IVTSQIFDIIIISLIILNMISMMA) traverse the membrane as a helical segment. Residues 1386–1396 (ESYNQPKAMKS) are Extracellular-facing. Residues 1397–1420 (ILDHLNWVFVVIFTLECLIKIFAL) form a helical membrane-spanning segment. Over 1421 to 1426 (RQYYFT) the chain is Cytoplasmic. Residues 1427 to 1450 (NGWNLFDCVVVLLSIVSTMISTLE) form a helical membrane-spanning segment. At 1451 to 1461 (NQEHIPFPPTL) the chain is on the extracellular side. A helical; Voltage-sensor transmembrane segment spans residues 1462–1484 (FRIVRLARIGRILRLVRAARGIR). The Cytoplasmic segment spans residues 1485–1499 (TLLFALMMSLPSLFN). Residues 1500–1522 (IGLLLFLIMFIYAILGMNWFSKV) traverse the membrane as a helical segment. At 1523–1536 (NPESGIDDIFNFKT) the chain is on the extracellular side. An intramembrane region (pore-forming) is located at residues 1537–1559 (FASSMLCLFQISTSAGWDSLLSP). Residues 1560 to 1579 (MLRSKESCNSSSENCHLPGI) lie on the Extracellular side of the membrane. N1568 carries an N-linked (GlcNAc...) asparagine glycan. A helical transmembrane segment spans residues 1580–1604 (ATSYFVSYIIISFLIVVNMYIAVIL). Residues 1605-1791 (ENFNTATEES…GVAKGKVHCD (187 aa)) are Cytoplasmic-facing.

The protein belongs to the sodium channel (TC 1.A.1.10) family. Nav1.9/SCN11A subfamily. As to quaternary structure, the voltage-resistant sodium channel consists of an ion conducting pore forming alpha-subunit regulated by one or more auxiliary subunits SCN1B, SCN2B and SCN3B. In terms of tissue distribution, expressed in the dorsal root ganglia and trigeminal ganglia, olfactory bulb, hippocampus, cerebellar cortex, spinal cord, spleen, small intestine and placenta.

It localises to the cell membrane. The enzyme catalyses Na(+)(in) = Na(+)(out). With respect to regulation, activity is not sensitive to inhibition by tetrodotoxin. In terms of biological role, sodium channel mediating the voltage-dependent sodium ion permeability of excitable membranes. Assuming opened or closed conformations in response to the voltage difference across the membrane, the protein forms a sodium-selective channel through which sodium ions may pass in accordance with their electrochemical gradient. Involved in membrane depolarization during action potential in nociceptors which function as key relay stations for the electrical transmission of pain signals from the periphery to the central nervous system. Also involved in rapid BDNF-evoked neuronal depolarization. This is Sodium channel protein type 11 subunit alpha from Homo sapiens (Human).